The following is a 438-amino-acid chain: Leupeptin-inactivating enzyme 1 (438 aa).

The N-terminal stretch at 1-37 (MSLSVSRRLAAVTAFAVAGLFASAVPAALAAPSAVAA) is a signal peptide. Residues H125 and D137 each coordinate Zn(2+). E171 serves as the catalytic Proton acceptor. The Zn(2+) site is built by E172, D200, and H287. C285 and C290 are disulfide-bonded. Residues 321 to 438 (VPPGQSFENT…GYINSWKITF (118 aa)) form the P/Homo B domain.

This sequence belongs to the peptidase M28 family. M28A subfamily. In terms of assembly, monomer. Zn(2+) serves as cofactor.

The protein resides in the secreted. Activity is inhibited by metalloprotease inhibitors and activated by Mg(2+) and Ca(2+). A leucine-specific metalloprotease that plays a role in controlling the amount of leupeptin during colony development. Degrades leupeptin into three components, acetyl-leucine, leucine and argininal. Has a strict preference for leucine at the P1 site. The protein is Leupeptin-inactivating enzyme 1 (lieA) of Streptomyces exfoliatus (Streptomyces hydrogenans).